Reading from the N-terminus, the 258-residue chain is Trans-aconitate 2-methyltransferase (258 aa).

The protein belongs to the methyltransferase superfamily. Tam family.

It localises to the cytoplasm. It carries out the reaction trans-aconitate + S-adenosyl-L-methionine = (E)-3-(methoxycarbonyl)pent-2-enedioate + S-adenosyl-L-homocysteine. Functionally, catalyzes the S-adenosylmethionine monomethyl esterification of trans-aconitate. The chain is Trans-aconitate 2-methyltransferase from Methylobacterium nodulans (strain LMG 21967 / CNCM I-2342 / ORS 2060).